The following is a 37-amino-acid chain: Esculentin-2B (37 aa).

Cysteine 31 and cysteine 37 are oxidised to a cystine.

This sequence belongs to the frog skin active peptide (FSAP) family. Esculentin subfamily. In terms of tissue distribution, expressed by the skin glands.

Its subcellular location is the secreted. Functionally, shows antibacterial activity against representative Gram-negative and Gram-positive bacterial species, and hemolytic activity. This Pelophylax lessonae (Pool frog) protein is Esculentin-2B.